We begin with the raw amino-acid sequence, 319 residues long: Annexin A4 (319 aa).

Ala2 carries the N-acetylalanine modification. A Phosphothreonine modification is found at Thr7. Ser12 is subject to Phosphoserine. Annexin repeat units lie at residues 14–85 (FSAT…GMIT), 86–157 (PTVL…SLSA), 169–241 (ALMR…AIVK), and 245–316 (NKSA…ILCG). N6-acetyllysine occurs at positions 213, 293, and 300.

The protein belongs to the annexin family. Expressed in pancreas (at protein level). Also detected in liver, spleen, intestine, stomach, kidney, and adrenal glands.

Its subcellular location is the zymogen granule membrane. Calcium/phospholipid-binding protein which promotes membrane fusion and is involved in exocytosis. The polypeptide is Annexin A4 (ANXA4) (Canis lupus familiaris (Dog)).